The following is a 350-amino-acid chain: Phosphotriesterase-related protein (350 aa).

Positions 22, 24, 169, 201, 230, and 298 each coordinate a divalent metal cation.

The protein belongs to the metallo-dependent hydrolases superfamily. Phosphotriesterase family. A divalent metal cation is required as a cofactor.

The chain is Phosphotriesterase-related protein from Drosophila melanogaster (Fruit fly).